We begin with the raw amino-acid sequence, 142 residues long: Large ribosomal subunit protein uL13 (142 aa).

It belongs to the universal ribosomal protein uL13 family. Part of the 50S ribosomal subunit.

In terms of biological role, this protein is one of the early assembly proteins of the 50S ribosomal subunit, although it is not seen to bind rRNA by itself. It is important during the early stages of 50S assembly. The chain is Large ribosomal subunit protein uL13 from Histophilus somni (strain 2336) (Haemophilus somnus).